Consider the following 324-residue polypeptide: tRNA dimethylallyltransferase (324 aa).

17 to 24 contributes to the ATP binding site; it reads GPTASGKT. 19–24 is a substrate binding site; that stretch reads TASGKT. Interaction with substrate tRNA regions lie at residues 42–45, 166–170, and 251–256; these read DSAL, QRIQR, and RCVGYR.

This sequence belongs to the IPP transferase family. As to quaternary structure, monomer. Requires Mg(2+) as cofactor.

The catalysed reaction is adenosine(37) in tRNA + dimethylallyl diphosphate = N(6)-dimethylallyladenosine(37) in tRNA + diphosphate. Functionally, catalyzes the transfer of a dimethylallyl group onto the adenine at position 37 in tRNAs that read codons beginning with uridine, leading to the formation of N6-(dimethylallyl)adenosine (i(6)A). This is tRNA dimethylallyltransferase from Burkholderia mallei (strain NCTC 10247).